We begin with the raw amino-acid sequence, 365 residues long: D-alanine--D-alanine ligase (365 aa).

The region spanning 135–345 is the ATP-grasp domain; it reads KLLLKSFNIP…YGSLVDKLIA (211 aa). 168–223 is an ATP binding site; it reads KQSLDYPVIVKPAMLGSSIGISIAYNETQIEKCIEEAFAYDLTVVIEKFMRAREIE. Mg(2+)-binding residues include aspartate 298, glutamate 312, and asparagine 314.

It belongs to the D-alanine--D-alanine ligase family. It depends on Mg(2+) as a cofactor. Requires Mn(2+) as cofactor.

The protein resides in the cytoplasm. The catalysed reaction is 2 D-alanine + ATP = D-alanyl-D-alanine + ADP + phosphate + H(+). It participates in cell wall biogenesis; peptidoglycan biosynthesis. In terms of biological role, cell wall formation. The polypeptide is D-alanine--D-alanine ligase (Borrelia turicatae (strain 91E135)).